The sequence spans 128 residues: UPF0325 protein YaeH (128 aa).

The protein belongs to the UPF0325 family.

The polypeptide is UPF0325 protein YaeH (Escherichia fergusonii (strain ATCC 35469 / DSM 13698 / CCUG 18766 / IAM 14443 / JCM 21226 / LMG 7866 / NBRC 102419 / NCTC 12128 / CDC 0568-73)).